The primary structure comprises 201 residues: MQPFTTHTGLAVMIDSTNIDTDQIIPKQFLSKVTRDGFGVHLFHDWRYLDDAGDQPNPEFSLNQSRYRGASILLAQENFGCGSSREHAPWALADFGLRAIIAQSFADIFYGNSINNGLLPVALTHAQVRQLMDEVAAEAGAQITVDLTSCKVVSPSGAEFSFTLAESARHKLLNGLDAIGLTLSHAAQIGQYETQIQGWRR.

Belongs to the LeuD family. LeuD type 1 subfamily. In terms of assembly, heterodimer of LeuC and LeuD.

The catalysed reaction is (2R,3S)-3-isopropylmalate = (2S)-2-isopropylmalate. It participates in amino-acid biosynthesis; L-leucine biosynthesis; L-leucine from 3-methyl-2-oxobutanoate: step 2/4. In terms of biological role, catalyzes the isomerization between 2-isopropylmalate and 3-isopropylmalate, via the formation of 2-isopropylmaleate. This chain is 3-isopropylmalate dehydratase small subunit, found in Shewanella baltica (strain OS155 / ATCC BAA-1091).